The sequence spans 212 residues: Lipopolysaccharide core heptose(II)-phosphate phosphatase (212 aa).

The N-terminal stretch at 1–32 (MSIGGVYELAFCRSSLKSKKYFIILLALAAIA) is a signal peptide.

The protein belongs to the phosphoglycerate mutase family. Ais subfamily.

The protein localises to the periplasm. It participates in bacterial outer membrane biogenesis; lipopolysaccharide metabolism. Functionally, catalyzes the dephosphorylation of heptose(II) of the outer membrane lipopolysaccharide core. The protein is Lipopolysaccharide core heptose(II)-phosphate phosphatase of Shigella boydii serotype 4 (strain Sb227).